Here is a 283-residue protein sequence, read N- to C-terminus: Diaminopimelate epimerase (283 aa).

Positions 13 and 66 each coordinate substrate. Cys-75 serves as the catalytic Proton donor. Residues 76-77 (GN), Asn-165, Asn-198, and 216-217 (ER) contribute to the substrate site. Cys-225 (proton acceptor) is an active-site residue. Position 226–227 (226–227 (GT)) interacts with substrate.

It belongs to the diaminopimelate epimerase family. In terms of assembly, homodimer.

The protein resides in the cytoplasm. The catalysed reaction is (2S,6S)-2,6-diaminopimelate = meso-2,6-diaminopimelate. It participates in amino-acid biosynthesis; L-lysine biosynthesis via DAP pathway; DL-2,6-diaminopimelate from LL-2,6-diaminopimelate: step 1/1. Catalyzes the stereoinversion of LL-2,6-diaminopimelate (L,L-DAP) to meso-diaminopimelate (meso-DAP), a precursor of L-lysine and an essential component of the bacterial peptidoglycan. This Acaryochloris marina (strain MBIC 11017) protein is Diaminopimelate epimerase.